We begin with the raw amino-acid sequence, 399 residues long: P2X purinoceptor 1 (399 aa).

Topologically, residues 1–28 (MARRLQDELSAFFFEYDTPRMVLVRNKK) are cytoplasmic. Residues 29-50 (VGVIFRLIQLVVLVYVIGWVFV) form a helical membrane-spanning segment. Residues 51-338 (YEKGYQTSSG…IPTMTTIGSG (288 aa)) are Extracellular-facing. The CTP site is built by Lys-68, Lys-70, and Lys-140. Lys-70 serves as a coordination point for ATP. Intrachain disulfides connect Cys-117–Cys-165, Cys-126–Cys-149, and Cys-132–Cys-159. 2 N-linked (GlcNAc...) asparagine glycosylation sites follow: Asn-153 and Asn-184. Thr-186 provides a ligand contact to CTP. ATP is bound at residue Thr-186. A glycan (N-linked (GlcNAc...) asparagine) is linked at Asn-210. Cystine bridges form between Cys-217/Cys-227 and Cys-261/Cys-270. Residues Ser-286, Asn-290, and Arg-292 each coordinate ATP. Positions 290 and 292 each coordinate CTP. Asn-300 carries N-linked (GlcNAc...) asparagine glycosylation. CTP is bound at residue Lys-309. Lys-309 lines the ATP pocket. The pore-forming motif stretch occupies residues 331 to 338 (TMTTIGSG). Residues 339-358 (IGIFGVATVLCDLLLLHILP) form a helical membrane-spanning segment. The Cytoplasmic segment spans residues 359–399 (KRHYYKQKKFKYAEDMGPGEGERDPAATSSTLGLQENMRTS). The segment at 374-399 (MGPGEGERDPAATSSTLGLQENMRTS) is disordered. Positions 385–399 (ATSSTLGLQENMRTS) are enriched in polar residues. Ser-387 and Ser-388 each carry phosphoserine. Thr-389 is subject to Phosphothreonine.

The protein belongs to the P2X receptor family. Functional P2XRs are organized as homomeric and heteromeric trimers. Forms heterodimer with P2RX2. Forms heterodimer with P2RX4. Forms heterodimer with P2RX5. Expressed in smooth muscle of the bladder and arteries.

The protein resides in the cell membrane. The enzyme catalyses Ca(2+)(in) = Ca(2+)(out). It catalyses the reaction K(+)(in) = K(+)(out). It carries out the reaction Na(+)(in) = Na(+)(out). Its activity is regulated as follows. Activated by low concentrations of ATP (&lt;1 uM). Undergoes rapid desensitisation. Sensitives to the ATP agonist:alpha/beta-methylene-ATP. Modulated by cholesterol. ATP-gated nonselective transmembrane cation channel permeable to potassium, sodium and with relatively high calcium permeability. Furthermore, CTP functions as a weak affinity agonist for P2RX1. Plays a role in male fertility, bladder contraction and platelet aggregation. Specifically, plays an important role in neurogenic contraction of smooth muscle of the vas deferens, and therefore is essential for normal male reproductive function. In addition, contributes to smooth muscle contractions of the urinary bladder. On platelets, contributes to platelet activation and aggregation and thereby, also to thrombosis. On neutrophils, it is involved in chemotaxis and in mitigating the activation of circulating cells. The protein is P2X purinoceptor 1 (P2rx1) of Mus musculus (Mouse).